We begin with the raw amino-acid sequence, 119 residues long: Large ribosomal subunit protein bL20 (119 aa).

This sequence belongs to the bacterial ribosomal protein bL20 family.

Its function is as follows. Binds directly to 23S ribosomal RNA and is necessary for the in vitro assembly process of the 50S ribosomal subunit. It is not involved in the protein synthesizing functions of that subunit. The chain is Large ribosomal subunit protein bL20 from Deinococcus geothermalis (strain DSM 11300 / CIP 105573 / AG-3a).